The primary structure comprises 316 residues: tRNA dimethylallyltransferase (316 aa).

17–24 lines the ATP pocket; sequence GPTASGKT. 19 to 24 serves as a coordination point for substrate; sequence TASGKT. Interaction with substrate tRNA regions lie at residues 42-45, 166-170, and 247-252; these read DSAL, QRLSR, and RCVGYR.

The protein belongs to the IPP transferase family. In terms of assembly, monomer. The cofactor is Mg(2+).

The enzyme catalyses adenosine(37) in tRNA + dimethylallyl diphosphate = N(6)-dimethylallyladenosine(37) in tRNA + diphosphate. In terms of biological role, catalyzes the transfer of a dimethylallyl group onto the adenine at position 37 in tRNAs that read codons beginning with uridine, leading to the formation of N6-(dimethylallyl)adenosine (i(6)A). This is tRNA dimethylallyltransferase from Erwinia tasmaniensis (strain DSM 17950 / CFBP 7177 / CIP 109463 / NCPPB 4357 / Et1/99).